The chain runs to 797 residues: Homoaconitase, mitochondrial (797 aa).

The transit peptide at 1–47 (MVARFVPSAMTVLVARRGLAMASTRRGWRGLAVNLKPAAGRQWRQAY) directs the protein to the mitochondrion. Residues Cys-404, Cys-471, and Cys-474 each contribute to the [4Fe-4S] cluster site.

This sequence belongs to the aconitase/IPM isomerase family. [4Fe-4S] cluster serves as cofactor.

The protein resides in the mitochondrion. The catalysed reaction is (2R,3S)-homoisocitrate = cis-homoaconitate + H2O. It participates in amino-acid biosynthesis; L-lysine biosynthesis via AAA pathway; L-alpha-aminoadipate from 2-oxoglutarate: step 3/5. Functionally, catalyzes the reversible hydration of cis-homoaconitate to (2R,3S)-homoisocitrate, a step in the alpha-aminoadipate pathway for lysine biosynthesis. The sequence is that of Homoaconitase, mitochondrial (LYS4) from Chaetomium globosum (strain ATCC 6205 / CBS 148.51 / DSM 1962 / NBRC 6347 / NRRL 1970) (Soil fungus).